The sequence spans 420 residues: Glucose-1-phosphate adenylyltransferase (420 aa).

Alpha-D-glucose 1-phosphate is bound by residues Y107, G172, E187 to K188, and S205.

Belongs to the bacterial/plant glucose-1-phosphate adenylyltransferase family. Homotetramer.

The catalysed reaction is alpha-D-glucose 1-phosphate + ATP + H(+) = ADP-alpha-D-glucose + diphosphate. It participates in glycan biosynthesis; glycogen biosynthesis. In terms of biological role, involved in the biosynthesis of ADP-glucose, a building block required for the elongation reactions to produce glycogen. Catalyzes the reaction between ATP and alpha-D-glucose 1-phosphate (G1P) to produce pyrophosphate and ADP-Glc. The polypeptide is Glucose-1-phosphate adenylyltransferase (Rhodopseudomonas palustris (strain HaA2)).